The following is a 443-amino-acid chain: Phosphoglucosamine mutase (443 aa).

Ser-102 serves as the catalytic Phosphoserine intermediate. Mg(2+) is bound by residues Ser-102, Asp-241, Asp-243, and Asp-245. Ser-102 carries the post-translational modification Phosphoserine.

This sequence belongs to the phosphohexose mutase family. Mg(2+) serves as cofactor. In terms of processing, activated by phosphorylation.

The enzyme catalyses alpha-D-glucosamine 1-phosphate = D-glucosamine 6-phosphate. In terms of biological role, catalyzes the conversion of glucosamine-6-phosphate to glucosamine-1-phosphate. This chain is Phosphoglucosamine mutase, found in Polaromonas sp. (strain JS666 / ATCC BAA-500).